We begin with the raw amino-acid sequence, 452 residues long: Asparagine--tRNA ligase (452 aa).

It belongs to the class-II aminoacyl-tRNA synthetase family. In terms of assembly, homodimer.

The protein localises to the cytoplasm. It catalyses the reaction tRNA(Asn) + L-asparagine + ATP = L-asparaginyl-tRNA(Asn) + AMP + diphosphate + H(+). This is Asparagine--tRNA ligase from Mycoplasma mycoides subsp. mycoides SC (strain CCUG 32753 / NCTC 10114 / PG1).